Consider the following 882-residue polypeptide: Alanine--tRNA ligase (882 aa).

Zn(2+) contacts are provided by H570, H574, C672, and H676.

The protein belongs to the class-II aminoacyl-tRNA synthetase family. It depends on Zn(2+) as a cofactor.

The protein resides in the cytoplasm. It carries out the reaction tRNA(Ala) + L-alanine + ATP = L-alanyl-tRNA(Ala) + AMP + diphosphate. Its function is as follows. Catalyzes the attachment of alanine to tRNA(Ala) in a two-step reaction: alanine is first activated by ATP to form Ala-AMP and then transferred to the acceptor end of tRNA(Ala). Also edits incorrectly charged Ser-tRNA(Ala) and Gly-tRNA(Ala) via its editing domain. This is Alanine--tRNA ligase from Xanthomonas axonopodis pv. citri (strain 306).